Here is a 289-residue protein sequence, read N- to C-terminus: MGIGLWVRTGLLMAFLTGLLVGIGYLIGGQGGMIIAFTIALFMNFFSYWFSDSIVLSWYNARIVSEEEAPELHRIVEKLAMQAGIPKPRVAIVPTLVPNAFATGRSPEHAVVAVTEGLLRILNRDELEGVIAHEISHIKNRDTLIQTIAAVLAGAIMVLVNFARWSLWFGAYDEDRDGGNIVALILAIILAPIAATLIQLAISRSREYLADETGAKISGKPHALASALMKIEEAVRYRPLKNGNPATAHMFIVNPFRGVDFVELFSTHPPTEKRIERLRKIAMEMGIIF.

2 consecutive transmembrane segments (helical) span residues 5–27 (LWVR…GYLI) and 40–60 (ALFM…SWYN). A Zn(2+)-binding site is contributed by His-133. Glu-134 is a catalytic residue. His-137 is a Zn(2+) binding site. A run of 2 helical transmembrane segments spans residues 143-163 (TLIQ…VNFA) and 181-201 (IVAL…IQLA). Position 207 (Glu-207) interacts with Zn(2+).

Belongs to the peptidase M48B family. Requires Zn(2+) as cofactor.

The protein localises to the cell membrane. This chain is Protease HtpX homolog, found in Pyrococcus furiosus (strain ATCC 43587 / DSM 3638 / JCM 8422 / Vc1).